A 224-amino-acid polypeptide reads, in one-letter code: TBP-related factor (224 aa).

Residues R14–Q34 are disordered. The segment covering V17–Q34 has biased composition (low complexity). 2 consecutive repeat copies span residues L51–L127 and L141–L218.

This sequence belongs to the TBP family. Primary spermatocytes in the adult testis and in a subset of cells in the dorsal medial region of the embryonic CNS.

Its subcellular location is the nucleus. Its function is as follows. Acts as a transcription factor. Binds to the TATA box promoter element which lies close to the position of transcription initiation. In terms of biological role, may be essential for embryonic development. This chain is TBP-related factor (Trf), found in Drosophila melanogaster (Fruit fly).